Consider the following 176-residue polypeptide: NAD(P)H-quinone oxidoreductase subunit I, chloroplastic (176 aa).

2 consecutive 4Fe-4S ferredoxin-type domains span residues 55 to 84 (GRIH…VNWE) and 95 to 124 (QTYS…MTEE). 8 residues coordinate [4Fe-4S] cluster: cysteine 64, cysteine 67, cysteine 70, cysteine 74, cysteine 104, cysteine 107, cysteine 110, and cysteine 114.

This sequence belongs to the complex I 23 kDa subunit family. NDH is composed of at least 16 different subunits, 5 of which are encoded in the nucleus. It depends on [4Fe-4S] cluster as a cofactor.

Its subcellular location is the plastid. It is found in the chloroplast thylakoid membrane. It carries out the reaction a plastoquinone + NADH + (n+1) H(+)(in) = a plastoquinol + NAD(+) + n H(+)(out). The catalysed reaction is a plastoquinone + NADPH + (n+1) H(+)(in) = a plastoquinol + NADP(+) + n H(+)(out). Its function is as follows. NDH shuttles electrons from NAD(P)H:plastoquinone, via FMN and iron-sulfur (Fe-S) centers, to quinones in the photosynthetic chain and possibly in a chloroplast respiratory chain. The immediate electron acceptor for the enzyme in this species is believed to be plastoquinone. Couples the redox reaction to proton translocation, and thus conserves the redox energy in a proton gradient. This chain is NAD(P)H-quinone oxidoreductase subunit I, chloroplastic, found in Mesostigma viride (Green alga).